Consider the following 90-residue polypeptide: METIVNGFNQPNAQASPLAYGLTMVAAGLAIMGAGVVSVGQGMAVAKAVEAIGRNPEATSKIRSTLIMGLAIVETASIYCFIIALLIIFV.

Transmembrane regions (helical) follow at residues 17-37 (PLAYGLTMVAAGLAIMGAGVV) and 70-90 (LAIVETASIYCFIIALLIIFV).

Belongs to the ATPase C chain family. In terms of assembly, F-type ATPases have 2 components, F(1) - the catalytic core - and F(0) - the membrane proton channel. F(1) has five subunits: alpha(3), beta(3), gamma(1), delta(1), epsilon(1). F(0) has three main subunits: a(1), b(2) and c(10-14). The alpha and beta chains form an alternating ring which encloses part of the gamma chain. F(1) is attached to F(0) by a central stalk formed by the gamma and epsilon chains, while a peripheral stalk is formed by the delta and b chains.

The protein localises to the cell membrane. F(1)F(0) ATP synthase produces ATP from ADP in the presence of a proton or sodium gradient. F-type ATPases consist of two structural domains, F(1) containing the extramembraneous catalytic core and F(0) containing the membrane proton channel, linked together by a central stalk and a peripheral stalk. During catalysis, ATP synthesis in the catalytic domain of F(1) is coupled via a rotary mechanism of the central stalk subunits to proton translocation. In terms of biological role, key component of the F(0) channel; it plays a direct role in translocation across the membrane. A homomeric c-ring of between 10-14 subunits forms the central stalk rotor element with the F(1) delta and epsilon subunits. In Metamycoplasma arthritidis (strain 158L3-1) (Mycoplasma arthritidis), this protein is ATP synthase subunit c.